The primary structure comprises 103 residues: MRATTAFQVIAFLAVGAAAAPTGLVQARAVDSLAVETDDIASSAGPRADDNGAASAGLKVKRQREYWCPNQVCAKTFATQEERDHHIANTVHPTNSKRDVLLQ.

An N-terminal signal peptide occupies residues 1–19 (MRATTAFQVIAFLAVGAAA). The C2H2-type zinc finger occupies 66–92 (YWCPNQVCAKTFATQEERDHHIANTVH). The tract at residues 82–103 (ERDHHIANTVHPTNSKRDVLLQ) is disordered.

The protein localises to the secreted. Its subcellular location is the host nucleus. Probable secreted effector that translocates into the nuclei of host cells to reprogram the expression of targeted genes by binding on effector binding elements in rice. In Pyricularia oryzae (strain 70-15 / ATCC MYA-4617 / FGSC 8958) (Rice blast fungus), this protein is Host transcription reprogramming factor 6.